Reading from the N-terminus, the 644-residue chain is Protein cueball (644 aa).

An N-terminal signal peptide occupies residues 1–26; the sequence is MIRIRFGMDVLLVLLLATCLLTPAHG. Over 27–531 the chain is Extracellular; that stretch reads TPLEWDFAVT…VCLTPRVWTS (505 aa). Residues Asn-82 and Asn-108 are each glycosylated (N-linked (GlcNAc...) asparagine). 3 LDL-receptor class B repeats span residues 121 to 166, 167 to 211, and 212 to 257; these read MNLF…DVCR, RKLY…DQLS, and DRLF…TNDA. N-linked (GlcNAc...) asparagine glycans are attached at residues Asn-175 and Asn-190. Positions 280–301 are disordered; it reads TTTSKPEEEDSTDSTDFTDPEP. A compositionally biased stretch (acidic residues) spans 286-301; the sequence is EEEDSTDSTDFTDPEP. Residue Asn-313 is glycosylated (N-linked (GlcNAc...) asparagine). EGF-like domains follow at residues 398–430 and 433–471; these read EIRE…FTGE and ELSV…ARCE. Cystine bridges form between Cys-402–Cys-411, Cys-406–Cys-421, Cys-437–Cys-447, Cys-441–Cys-459, and Cys-461–Cys-470. N-linked (GlcNAc...) asparagine glycosylation is found at Asn-473 and Asn-508. Residues 532-552 form a helical membrane-spanning segment; that stretch reads SVIIILVVGIVSSLLLVAVIV. The Cytoplasmic portion of the chain corresponds to 553–644; it reads HGIRRLYKPK…LIHNMEDDLY (92 aa).

It belongs to the cueball family.

Its subcellular location is the cell membrane. In terms of biological role, has a role in spermatogenesis and oogenesis. This is Protein cueball from Drosophila sechellia (Fruit fly).